We begin with the raw amino-acid sequence, 698 residues long: DNA ligase (698 aa).

Residues 40–44 (DDVYD), 89–90 (SL), and Glu123 contribute to the NAD(+) site. Catalysis depends on Lys125, which acts as the N6-AMP-lysine intermediate. NAD(+)-binding residues include Arg146, Glu184, Lys300, and Lys324. Residues Cys417, Cys420, Cys435, and Cys441 each contribute to the Zn(2+) site. Residues 618–698 (SSASPVAGKA…EWLALTGAAD (81 aa)) enclose the BRCT domain.

This sequence belongs to the NAD-dependent DNA ligase family. LigA subfamily. Requires Mg(2+) as cofactor. It depends on Mn(2+) as a cofactor.

It catalyses the reaction NAD(+) + (deoxyribonucleotide)n-3'-hydroxyl + 5'-phospho-(deoxyribonucleotide)m = (deoxyribonucleotide)n+m + AMP + beta-nicotinamide D-nucleotide.. Its function is as follows. DNA ligase that catalyzes the formation of phosphodiester linkages between 5'-phosphoryl and 3'-hydroxyl groups in double-stranded DNA using NAD as a coenzyme and as the energy source for the reaction. It is essential for DNA replication and repair of damaged DNA. The polypeptide is DNA ligase (Paramagnetospirillum magneticum (strain ATCC 700264 / AMB-1) (Magnetospirillum magneticum)).